The sequence spans 314 residues: MKYKTTSVSIIYINEDMINQRIDNFLQKKLKNVPRSMIYRIIRTGKIRINKKRIKPDYKLKIGDKLRIPPIKILCEKKSSLLTTEYKKNLLNNILYEDNYLLIINKPSGIAVHGGSGINLGVIEYFRKIRPLEKFLELVHRIDRDTSGVLMLAKKRRSLLSLHKQIREKKVQKKYIALVHGLWPLSLRKVSEPLLKTHLKNKQRKILINKEGKPAETYFKIKKQYLFTTLVSITPKTGRTHQIRVHTLHAGHPILFDKRYGKRDLDCNIKNKTKINRLLLHATSINFIHPETGKKMHIVAPLDVYFKNYLNTLI.

Positions 20–94 (QRIDNFLQKK…EYKKNLLNNI (75 aa)) constitute an S4 RNA-binding domain. D143 is an active-site residue.

Belongs to the pseudouridine synthase RluA family.

The catalysed reaction is uridine(955/2504/2580) in 23S rRNA = pseudouridine(955/2504/2580) in 23S rRNA. Functionally, responsible for synthesis of pseudouridine from uracil at positions 955, 2504 and 2580 in 23S ribosomal RNA. This Buchnera aphidicola subsp. Schizaphis graminum (strain Sg) protein is Ribosomal large subunit pseudouridine synthase C (rluC).